Consider the following 400-residue polypeptide: 8-amino-7-oxononanoate synthase (400 aa).

Residue Arg21 coordinates substrate. 112 to 113 (GY) provides a ligand contact to pyridoxal 5'-phosphate. Residue His137 coordinates substrate. Residues Ser183, His211, and Thr239 each contribute to the pyridoxal 5'-phosphate site. An N6-(pyridoxal phosphate)lysine modification is found at Lys242. Thr358 lines the substrate pocket.

Belongs to the class-II pyridoxal-phosphate-dependent aminotransferase family. BioF subfamily. As to quaternary structure, homodimer. It depends on pyridoxal 5'-phosphate as a cofactor.

The catalysed reaction is 6-carboxyhexanoyl-[ACP] + L-alanine + H(+) = (8S)-8-amino-7-oxononanoate + holo-[ACP] + CO2. Its pathway is cofactor biosynthesis; biotin biosynthesis. Catalyzes the decarboxylative condensation of pimeloyl-[acyl-carrier protein] and L-alanine to produce 8-amino-7-oxononanoate (AON), [acyl-carrier protein], and carbon dioxide. The chain is 8-amino-7-oxononanoate synthase from Burkholderia lata (strain ATCC 17760 / DSM 23089 / LMG 22485 / NCIMB 9086 / R18194 / 383).